The chain runs to 204 residues: N-(5'-phosphoribosyl)anthranilate isomerase (204 aa).

It belongs to the TrpF family.

It carries out the reaction N-(5-phospho-beta-D-ribosyl)anthranilate = 1-(2-carboxyphenylamino)-1-deoxy-D-ribulose 5-phosphate. It functions in the pathway amino-acid biosynthesis; L-tryptophan biosynthesis; L-tryptophan from chorismate: step 3/5. In Bacillus anthracis (strain A0248), this protein is N-(5'-phosphoribosyl)anthranilate isomerase.